Consider the following 199-residue polypeptide: Holliday junction branch migration complex subunit RuvA (199 aa).

The segment at 1–64 is domain I; the sequence is MFAYIKGTVE…EDIAVLYGFG (64 aa). Residues 65–143 form a domain II region; sequence TVEELTMFEM…KEQLTSSIPM (79 aa). Residues 144–151 are flexible linker; the sequence is TSPENNEV. The tract at residues 152–199 is domain III; that stretch reads TGDSVLSEAVSALMVLGYGSAEASSTISGIYEKGISVEELVKKALKSL.

This sequence belongs to the RuvA family. In terms of assembly, homotetramer. Forms an RuvA(8)-RuvB(12)-Holliday junction (HJ) complex. HJ DNA is sandwiched between 2 RuvA tetramers; dsDNA enters through RuvA and exits via RuvB. An RuvB hexamer assembles on each DNA strand where it exits the tetramer. Each RuvB hexamer is contacted by two RuvA subunits (via domain III) on 2 adjacent RuvB subunits; this complex drives branch migration. In the full resolvosome a probable DNA-RuvA(4)-RuvB(12)-RuvC(2) complex forms which resolves the HJ.

It is found in the cytoplasm. Functionally, the RuvA-RuvB-RuvC complex processes Holliday junction (HJ) DNA during genetic recombination and DNA repair, while the RuvA-RuvB complex plays an important role in the rescue of blocked DNA replication forks via replication fork reversal (RFR). RuvA specifically binds to HJ cruciform DNA, conferring on it an open structure. The RuvB hexamer acts as an ATP-dependent pump, pulling dsDNA into and through the RuvAB complex. HJ branch migration allows RuvC to scan DNA until it finds its consensus sequence, where it cleaves and resolves the cruciform DNA. This is Holliday junction branch migration complex subunit RuvA from Ruminiclostridium cellulolyticum (strain ATCC 35319 / DSM 5812 / JCM 6584 / H10) (Clostridium cellulolyticum).